We begin with the raw amino-acid sequence, 198 residues long: tRNA(Phe) 7-((3-amino-3-carboxypropyl)-4-demethylwyosine(37)-N(4))-methyltransferase 1 (198 aa).

It belongs to the TYW3 family.

It catalyses the reaction 4-demethyl-7-[(3S)-3-amino-3-carboxypropyl]wyosine(37) in tRNA(Phe) + S-adenosyl-L-methionine = 7-[(3S)-3-amino-3-carboxypropyl]wyosine(37) in tRNA(Phe) + S-adenosyl-L-homocysteine + H(+). Functionally, S-adenosyl-L-methionine-dependent methyltransferase that acts as a component of the wyosine derivatives biosynthesis pathway. Probably methylates N-4 position of wybutosine-86 to produce wybutosine-72. This Thermococcus kodakarensis (strain ATCC BAA-918 / JCM 12380 / KOD1) (Pyrococcus kodakaraensis (strain KOD1)) protein is tRNA(Phe) 7-((3-amino-3-carboxypropyl)-4-demethylwyosine(37)-N(4))-methyltransferase 1.